The chain runs to 350 residues: RNA 3'-terminal phosphate cyclase (350 aa).

Residues glutamine 100 and 290–294 (FLGDQ) each bind ATP. Catalysis depends on histidine 314, which acts as the Tele-AMP-histidine intermediate.

Belongs to the RNA 3'-terminal cyclase family. Type 1 subfamily.

It localises to the cytoplasm. It carries out the reaction a 3'-end 3'-phospho-ribonucleotide-RNA + ATP = a 3'-end 2',3'-cyclophospho-ribonucleotide-RNA + AMP + diphosphate. In terms of biological role, catalyzes the conversion of 3'-phosphate to a 2',3'-cyclic phosphodiester at the end of RNA. The mechanism of action of the enzyme occurs in 3 steps: (A) adenylation of the enzyme by ATP; (B) transfer of adenylate to an RNA-N3'P to produce RNA-N3'PP5'A; (C) and attack of the adjacent 2'-hydroxyl on the 3'-phosphorus in the diester linkage to produce the cyclic end product. The biological role of this enzyme is unknown but it is likely to function in some aspects of cellular RNA processing. The sequence is that of RNA 3'-terminal phosphate cyclase from Thermococcus sibiricus (strain DSM 12597 / MM 739).